A 1006-amino-acid polypeptide reads, in one-letter code: D-2-hydroxyglutarate dehydrogenase (1006 aa).

The region spanning 47-279 (YQRLPQAAVF…VEAKLNVLPI (233 aa)) is the FAD-binding PCMH-type domain. 2 residues coordinate (R)-2-hydroxyglutarate: R397 and H495. The region spanning 655–687 (SHEVYDAMAGCLACKSCAGQCPIKVNVPDFRSR) is the 4Fe-4S ferredoxin-type domain. [4Fe-4S] cluster-binding residues include C665, C668, C671, and C675.

It in the N-terminal section; belongs to the FAD-binding oxidoreductase/transferase type 4 family. The cofactor is [4Fe-4S] cluster. FAD is required as a cofactor.

The catalysed reaction is (R)-2-hydroxyglutarate + A = 2-oxoglutarate + AH2. Its pathway is amino-acid degradation. In terms of biological role, catalyzes the oxidation of D-2-hydroxyglutarate (D-2-HGA) to 2-oxoglutarate. Is involved in a D-lysine catabolic pathway. This Pseudomonas putida (strain ATCC 47054 / DSM 6125 / CFBP 8728 / NCIMB 11950 / KT2440) protein is D-2-hydroxyglutarate dehydrogenase.